The primary structure comprises 401 residues: Nicotinate phosphoribosyltransferase (401 aa).

His221 carries the phosphohistidine; by autocatalysis modification.

Belongs to the NAPRTase family. In terms of processing, transiently phosphorylated on a His residue during the reaction cycle. Phosphorylation strongly increases the affinity for substrates and increases the rate of nicotinate D-ribonucleotide production. Dephosphorylation regenerates the low-affinity form of the enzyme, leading to product release.

It catalyses the reaction nicotinate + 5-phospho-alpha-D-ribose 1-diphosphate + ATP + H2O = nicotinate beta-D-ribonucleotide + ADP + phosphate + diphosphate. Its pathway is cofactor biosynthesis; NAD(+) biosynthesis; nicotinate D-ribonucleotide from nicotinate: step 1/1. Functionally, catalyzes the synthesis of beta-nicotinate D-ribonucleotide from nicotinate and 5-phospho-D-ribose 1-phosphate at the expense of ATP. The chain is Nicotinate phosphoribosyltransferase from Yersinia pseudotuberculosis serotype O:1b (strain IP 31758).